The chain runs to 297 residues: HTH-type transcriptional regulator ArgP (297 aa).

One can recognise an HTH lysR-type domain in the interval 4–60 (PDYRTLQALDAVIRERGFERAAQKLCITQSAVSQRIKQLENMFGQPLLVRTVPPRPT). The H-T-H motif DNA-binding region spans 21 to 40 (FERAAQKLCITQSAVSQRIK).

The protein belongs to the LysR transcriptional regulatory family. Homodimer.

Its function is as follows. Controls the transcription of genes involved in arginine and lysine metabolism. In Salmonella choleraesuis (strain SC-B67), this protein is HTH-type transcriptional regulator ArgP.